The primary structure comprises 316 residues: Cyclin-dependent kinase inhibitor 1C (316 aa).

Residue Arg107 is modified to Omega-N-methylarginine. The tract at residues 124–153 is disordered; sequence ESLDGLEEAPEQLPSVPVPAPASTPPPVPV. The segment covering 139-153 has biased composition (pro residues); the sequence is VPVPAPASTPPPVPV. 9 consecutive repeat copies span residues 156–159, 160–163, 180–183, 184–187, 188–191, 198–201, 202–205, 206–209, and 210–213. Residues 156 to 213 form a 9 X 4 AA repeats of P-A-P-A region; sequence PAPAPAPAPVAAPVAAPVAVAVLAPAPAPAPAPAPAPAPVAAPAPAPAPAPAPAPAPA. Over residues 181–217 the composition is skewed to pro residues; it reads APAPAPAPAPAPAPVAAPAPAPAPAPAPAPAPAPAPD. The disordered stretch occupies residues 181-260; the sequence is APAPAPAPAP…AAGTAAASAN (80 aa). The span at 223–233 shows a compositional bias: polar residues; it reads SAEQGANQGQR. Low complexity predominate over residues 251–260; that stretch reads AAGTAAASAN. Phosphoserine is present on Ser268. Residues 278–281 carry the Nuclear localization signal motif; the sequence is KRKR. The segment at 278–316 is disordered; that stretch reads KRKRSAPEKSSGDVPAPCPSPSAAPGVGSVEQTPRKRLR.

The protein belongs to the CDI family. Interacts with PCNA. Expressed in the heart, brain, lung, skeletal muscle, kidney, pancreas and testis. Expressed in the eye. High levels are seen in the placenta while low levels are seen in the liver.

The protein localises to the nucleus. Functionally, potent tight-binding inhibitor of several G1 cyclin/CDK complexes (cyclin E-CDK2, cyclin D2-CDK4, and cyclin A-CDK2) and, to lesser extent, of the mitotic cyclin B-CDC2. Negative regulator of cell proliferation. May play a role in maintenance of the non-proliferative state throughout life. The sequence is that of Cyclin-dependent kinase inhibitor 1C (CDKN1C) from Homo sapiens (Human).